Here is a 278-residue protein sequence, read N- to C-terminus: Transmembrane protein 41A-B (278 aa).

Positions 1–23 (MRSIWGLIVLVAAATFYLYLLSA) are cleaved as a signal peptide. The next 5 membrane-spanning stretches (helical) occupy residues 78 to 98 (GYVF…AIPG), 101 to 121 (FLNM…IACT), 164 to 184 (LFFF…FLNV), 191 to 211 (IPIP…NFIC), and 230 to 250 (WFTL…GALI).

The protein belongs to the TMEM41 family.

It localises to the membrane. In Danio rerio (Zebrafish), this protein is Transmembrane protein 41A-B.